The chain runs to 606 residues: Neutral/alkaline invertase 3, chloroplastic (606 aa).

The transit peptide at 1–58 directs the protein to the chloroplast; that stretch reads MGIAEVALHSMPGAFAAHSPASNLPLAADAARGRRRRSANSLHSSRALQGPVRFPGLR. The interval 97-126 is disordered; that stretch reads RVPGQAVGGNGSVNGSAAKPPPQRRKASSV.

This sequence belongs to the glycosyl hydrolase 100 family.

It localises to the plastid. Its subcellular location is the chloroplast. The enzyme catalyses Hydrolysis of terminal non-reducing beta-D-fructofuranoside residues in beta-D-fructofuranosides.. Mitochondrial invertase that cleaves sucrose into glucose and fructose. This chain is Neutral/alkaline invertase 3, chloroplastic, found in Oryza sativa subsp. japonica (Rice).